Here is a 522-residue protein sequence, read N- to C-terminus: U4/U6 small nuclear ribonucleoprotein Prp4 (522 aa).

Residues 1-13 are compositionally biased toward polar residues; sequence MASSRASSTQATK. A disordered region spans residues 1 to 20; it reads MASSRASSTQATKTKAPDDL. An N6-acetyllysine modification is found at Lys27. WD repeat units follow at residues 229-268, 271-318, 321-360, 363-402, 405-444, 447-487, and 490-521; these read GDDRPISYCHFSPNSKMLATACWSGLCKLWSVPDCNLLHT, GHNT…PVAD, GHTVRVARVMWHPSGRFLGTTCYDRSWRLWDLEAQEEILH, GHSMGVYDIAFHQDGSLAGTGGLDAFGRVWDLRTGRCIMF, GHLKEIYGINFSPNGYHIATGSGDNTCKVWDLRQRRCVYT, AHQN…PLKT, and GHEGKVMGLDISSDGQLIATCSYDRTFKLWMA.

As to quaternary structure, component of the precatalytic spliceosome (spliceosome B complex). Component of the U4/U6-U5 tri-snRNP complex, a building block of the precatalytic spliceosome (spliceosome B complex). The U4/U6-U5 tri-snRNP complex is composed of the U4, U6 and U5 snRNAs and at least PRPF3, PRPF4, PRPF6, PRPF8, PRPF31, SNRNP200, TXNL4A, SNRNP40, SNRPB, SNRPD1, SNRPD2, SNRPD3, SNRPE, SNRPF, SNRPG, DDX23, CD2BP2, PPIH, SNU13, EFTUD2, SART1 and USP39, plus LSM2, LSM3, LSM4, LSM5, LSM6, LSM7 and LSM8. Interacts directly with PRPF18, PPIH and PRPF3. Part of a heteromeric complex containing PPIH, PRPF3 and PRPF4 that is stable in the absence of RNA. Interacts with ERCC6.

It localises to the nucleus. It is found in the nucleus speckle. In terms of biological role, plays a role in pre-mRNA splicing as component of the U4/U6-U5 tri-snRNP complex that is involved in spliceosome assembly, and as component of the precatalytic spliceosome (spliceosome B complex). This is U4/U6 small nuclear ribonucleoprotein Prp4 (PRPF4) from Homo sapiens (Human).